Reading from the N-terminus, the 258-residue chain is Rho-related GTP-binding protein RhoU (258 aa).

Residues Met-1–Ala-45 are disordered. Residues Phe-10–Gly-27 show a composition bias toward basic and acidic residues. The span at Gly-29 to Ala-45 shows a compositional bias: gly residues. GTP-binding positions include Gly-56–Thr-63, Asp-103–Gln-107, and Thr-161–Asp-164. Glycyl lysine isopeptide (Lys-Gly) (interchain with G-Cter in ubiquitin) cross-links involve residues Lys-177 and Lys-248. Residue Cys-256 is the site of S-palmitoyl cysteine attachment.

The protein belongs to the small GTPase superfamily. Rho family. As to quaternary structure, interacts with PAK1. Interacts with PAK3. Interacts with ARHGAP30 in a GTP-independent manner. In its GTP-loaded conformation, interacts with ARHGAP31. Interacts with PTK2B/PYK2. Interacts with PAK4; the interaction is PAK4 kinase activity-independent and protects RHOU from ubiquitination. Mg(2+) is required as a cofactor. Ubiquitinated. 'Lys-48'-linked ubiquitination at Lys-177 and Lys-248 by the ECS(RAB40A) complex leading to its degradation. In terms of processing, tyrosine phosphorylated by SRC in response to PTK2B/PYK2 activation. As to expression, ubiquitously expressed in all tissues examined. Expressed at high levels in the stomach, small intestine, brain, skeletal muscle and placenta.

Its subcellular location is the cell membrane. It localises to the golgi apparatus membrane. The protein localises to the cell junction. It is found in the focal adhesion. The protein resides in the cell projection. Its subcellular location is the podosome. Its function is as follows. Binds to and activates protein kinase PAK1. Plays a role in the regulation of cell morphology, cytoskeletal organization and focal adhesion assembly during cell migration. Also stimulates quiescent cells to reenter the cell cycle. Has no detectable GTPase activity but its high intrinsic guanine nucleotide exchange activity suggests it is constitutively GTP-bound. The sequence is that of Rho-related GTP-binding protein RhoU from Homo sapiens (Human).